Consider the following 61-residue polypeptide: Small ribosomal subunit protein uS14 (61 aa).

Positions 24, 27, 40, and 43 each coordinate Zn(2+).

The protein belongs to the universal ribosomal protein uS14 family. Zinc-binding uS14 subfamily. Part of the 30S ribosomal subunit. Contacts proteins S3 and S10. It depends on Zn(2+) as a cofactor.

In terms of biological role, binds 16S rRNA, required for the assembly of 30S particles and may also be responsible for determining the conformation of the 16S rRNA at the A site. The protein is Small ribosomal subunit protein uS14 of Natranaerobius thermophilus (strain ATCC BAA-1301 / DSM 18059 / JW/NM-WN-LF).